The chain runs to 236 residues: Large ribosomal subunit protein uL1 (236 aa).

It belongs to the universal ribosomal protein uL1 family. As to quaternary structure, part of the 50S ribosomal subunit.

Binds directly to 23S rRNA. The L1 stalk is quite mobile in the ribosome, and is involved in E site tRNA release. In terms of biological role, protein L1 is also a translational repressor protein, it controls the translation of the L11 operon by binding to its mRNA. This Heliobacterium modesticaldum (strain ATCC 51547 / Ice1) protein is Large ribosomal subunit protein uL1.